Here is a 259-residue protein sequence, read N- to C-terminus: Ubiquitin-conjugating enzyme E2 J2 (259 aa).

Residues Met1–His226 are Cytoplasmic-facing. Positions Thr12 to Glu162 constitute a UBC core domain. The active-site Glycyl thioester intermediate is the Cys94. The interval Gln174–His200 is disordered. A helical; Anchor for type IV membrane protein membrane pass occupies residues Gly227–Tyr247. The Lumenal segment spans residues Thr248–Glu259.

It belongs to the ubiquitin-conjugating enzyme family.

The protein resides in the endoplasmic reticulum membrane. The enzyme catalyses S-ubiquitinyl-[E1 ubiquitin-activating enzyme]-L-cysteine + [E2 ubiquitin-conjugating enzyme]-L-cysteine = [E1 ubiquitin-activating enzyme]-L-cysteine + S-ubiquitinyl-[E2 ubiquitin-conjugating enzyme]-L-cysteine.. Its pathway is protein modification; protein ubiquitination. Catalyzes the covalent attachment of ubiquitin to other proteins. Seems to function in the selective degradation of misfolded membrane proteins from the endoplasmic reticulum (ERAD). In cooperation with the GATOR2 complex, catalyzes 'Lys-6'-linked ubiquitination of NPRL2. This is Ubiquitin-conjugating enzyme E2 J2 (UBE2J2) from Bos taurus (Bovine).